Here is a 488-residue protein sequence, read N- to C-terminus: Probable cytosol aminopeptidase (488 aa).

Mn(2+)-binding residues include lysine 254 and aspartate 259. Residue lysine 266 is part of the active site. Residues aspartate 277, aspartate 336, and glutamate 338 each contribute to the Mn(2+) site. Arginine 340 is a catalytic residue.

It belongs to the peptidase M17 family. Mn(2+) serves as cofactor.

The protein localises to the cytoplasm. The catalysed reaction is Release of an N-terminal amino acid, Xaa-|-Yaa-, in which Xaa is preferably Leu, but may be other amino acids including Pro although not Arg or Lys, and Yaa may be Pro. Amino acid amides and methyl esters are also readily hydrolyzed, but rates on arylamides are exceedingly low.. The enzyme catalyses Release of an N-terminal amino acid, preferentially leucine, but not glutamic or aspartic acids.. Its function is as follows. Presumably involved in the processing and regular turnover of intracellular proteins. Catalyzes the removal of unsubstituted N-terminal amino acids from various peptides. The sequence is that of Probable cytosol aminopeptidase from Roseiflexus castenholzii (strain DSM 13941 / HLO8).